Here is a 310-residue protein sequence, read N- to C-terminus: tRNA-cytidine(32) 2-sulfurtransferase (310 aa).

Residues 44–49 (SGGKDS) carry the PP-loop motif motif. Residues Cys119, Cys122, and Cys210 each coordinate [4Fe-4S] cluster.

It belongs to the TtcA family. Homodimer. Mg(2+) serves as cofactor. Requires [4Fe-4S] cluster as cofactor.

The protein localises to the cytoplasm. It catalyses the reaction cytidine(32) in tRNA + S-sulfanyl-L-cysteinyl-[cysteine desulfurase] + AH2 + ATP = 2-thiocytidine(32) in tRNA + L-cysteinyl-[cysteine desulfurase] + A + AMP + diphosphate + H(+). It participates in tRNA modification. In terms of biological role, catalyzes the ATP-dependent 2-thiolation of cytidine in position 32 of tRNA, to form 2-thiocytidine (s(2)C32). The sulfur atoms are provided by the cysteine/cysteine desulfurase (IscS) system. This Saccharophagus degradans (strain 2-40 / ATCC 43961 / DSM 17024) protein is tRNA-cytidine(32) 2-sulfurtransferase.